Here is a 415-residue protein sequence, read N- to C-terminus: Nacrein-like protein F (415 aa).

N-linked (GlcNAc...) asparagine glycosylation is present at Asn-27. The Alpha-carbonic anhydrase domain occupies Ala-33–Phe-414. The Zn(2+) site is built by His-132, His-134, and His-157. Residues Asp-201–Arg-297 form a disordered region. A compositionally biased stretch (basic and acidic residues) spans Glu-207 to Asn-219. Over residues Asn-220–Glu-289 the composition is skewed to low complexity. A run of 22 repeats spans residues Gly-225–Asn-227, Gly-228–Asn-230, Gly-231–Asn-233, Gly-234–Asn-236, Gly-237–Asn-239, Gly-240–Asn-242, Gly-243–Asn-245, Gly-246–Asn-248, Gly-249–Asn-251, Gly-252–Asn-254, Gly-255–Asn-257, Gly-258–Asn-260, Gly-261–Asn-263, Gly-264–Asn-266, Gly-267–Asn-269, Gly-270–Asn-272, Gly-273–Asn-275, Gly-276–Asn-278, Gly-279–Asn-281, Gly-282–Asn-284, Gly-285–Asn-286, and Gly-288–Asn-290. The interval Gly-225–Asn-290 is 22 X 3 AA approximate tandem repeats of G-X-N. Residue Thr-355–Thr-356 participates in substrate binding.

The protein belongs to the alpha-carbonic anhydrase family. In terms of assembly, homooligomer; disulfide-linked. May also be disulfide-linked to insoluble organic matrix. Zn(2+) serves as cofactor. Expressed in the mantle.

The protein resides in the secreted. It localises to the extracellular space. It is found in the extracellular matrix. It catalyses the reaction hydrogencarbonate + H(+) = CO2 + H2O. Functionally, acts as a negative regulator for calcification in the shells of mollusks. May function both as a calcium concentrator and as a carbonic anhydrase required for production of carbonate ions, which are assembled to CaCO(3) at mineralization sites. Is important for shell formation in both the calcitic prismatic layer and the aragonitic nacreous layer. Shows inhibitory activity of crystal formation when present in free state but, when attached to the insoluble matrix, may regulate the form and size of aragonite crystal. The protein is Nacrein-like protein F of Pinctada fucata (Akoya pearl oyster).